Consider the following 200-residue polypeptide: NAD(P)H dehydrogenase (quinone) (200 aa).

The 188-residue stretch at 4-191 (VLVLYYSSYG…GGARYQGALV (188 aa)) folds into the Flavodoxin-like domain. FMN contacts are provided by residues 10–15 (SSYGHI) and 79–81 (TRF). NAD(+) is bound at residue tyrosine 12. Position 99 (tryptophan 99) interacts with substrate. FMN-binding positions include 114–120 (STASQHG) and histidine 135.

Belongs to the WrbA family. FMN is required as a cofactor.

It catalyses the reaction a quinone + NADH + H(+) = a quinol + NAD(+). It carries out the reaction a quinone + NADPH + H(+) = a quinol + NADP(+). This chain is NAD(P)H dehydrogenase (quinone), found in Rhodospirillum centenum (strain ATCC 51521 / SW).